Reading from the N-terminus, the 402-residue chain is Protein indeterminate-domain 12 (402 aa).

A disordered region spans residues 47-66; sequence TETHKPKKKRGLPGNPDPDA. Ser-72 is subject to Phosphoserine. 2 consecutive C2H2-type zinc fingers follow at residues 82 to 104 and 124 to 154; these read FVCE…RRGH and YVCP…CRKH. Residues 146 to 153 carry the Nuclear localization signal motif; sequence IKKHFCRK. The segment at 159-183 adopts a C2H2-type 2; degenerate zinc-finger fold; it reads WKCEKCSKFYAVQSDWKAHTKICGT. Positions 161, 164, 177, 181, 188, 190, 203, and 207 each coordinate Zn(2+). The CCHC-type 2; atypical zinc-finger motif lies at 186–209; sequence YRCDCGTLFSRKDTFITHRAFCDA. The tract at residues 196–208 is SHR-binding; that stretch reads RKDTFITHRAFCD.

It is found in the nucleus. In terms of biological role, probable transcription factor. This chain is Protein indeterminate-domain 12, found in Arabidopsis thaliana (Mouse-ear cress).